Reading from the N-terminus, the 465-residue chain is UDP-N-acetylmuramate--L-alanine ligase (465 aa).

125–131 (GTHGKTT) contributes to the ATP binding site.

It belongs to the MurCDEF family.

Its subcellular location is the cytoplasm. The catalysed reaction is UDP-N-acetyl-alpha-D-muramate + L-alanine + ATP = UDP-N-acetyl-alpha-D-muramoyl-L-alanine + ADP + phosphate + H(+). It functions in the pathway cell wall biogenesis; peptidoglycan biosynthesis. In terms of biological role, cell wall formation. The protein is UDP-N-acetylmuramate--L-alanine ligase of Deinococcus geothermalis (strain DSM 11300 / CIP 105573 / AG-3a).